The following is a 162-amino-acid chain: NADH-quinone oxidoreductase subunit I (162 aa).

4Fe-4S ferredoxin-type domains lie at 53 to 83 (LRRY…IDSA) and 93 to 122 (TRYD…ETHI). Residues Cys-63, Cys-66, Cys-69, Cys-73, Cys-102, Cys-105, Cys-108, and Cys-112 each contribute to the [4Fe-4S] cluster site.

Belongs to the complex I 23 kDa subunit family. In terms of assembly, NDH-1 is composed of 14 different subunits. Subunits NuoA, H, J, K, L, M, N constitute the membrane sector of the complex. [4Fe-4S] cluster serves as cofactor.

The protein localises to the cell inner membrane. It carries out the reaction a quinone + NADH + 5 H(+)(in) = a quinol + NAD(+) + 4 H(+)(out). Its function is as follows. NDH-1 shuttles electrons from NADH, via FMN and iron-sulfur (Fe-S) centers, to quinones in the respiratory chain. The immediate electron acceptor for the enzyme in this species is believed to be ubiquinone. Couples the redox reaction to proton translocation (for every two electrons transferred, four hydrogen ions are translocated across the cytoplasmic membrane), and thus conserves the redox energy in a proton gradient. This is NADH-quinone oxidoreductase subunit I from Xanthomonas axonopodis pv. citri (strain 306).